The chain runs to 366 residues: D-alanine--D-alanine ligase (366 aa).

Residues 150–353 (KRVLRDAGVP…YPALVDRLIV (204 aa)) form the ATP-grasp domain. Residue 180–235 (IGQLGLPLFIKPASQGSSVGVSKVTDRAGFAAALALAFRYDAKVLVEQGISGREIE) coordinates ATP. Aspartate 307, glutamate 320, and asparagine 322 together coordinate Mg(2+).

The protein belongs to the D-alanine--D-alanine ligase family. It depends on Mg(2+) as a cofactor. Mn(2+) is required as a cofactor.

It localises to the cytoplasm. It catalyses the reaction 2 D-alanine + ATP = D-alanyl-D-alanine + ADP + phosphate + H(+). Its pathway is cell wall biogenesis; peptidoglycan biosynthesis. Cell wall formation. The chain is D-alanine--D-alanine ligase from Sodalis glossinidius (strain morsitans).